A 209-amino-acid polypeptide reads, in one-letter code: Uracil phosphoribosyltransferase (209 aa).

5-phospho-alpha-D-ribose 1-diphosphate is bound by residues R78, R103, and 130 to 138; that span reads DPMLATAGS. Uracil is bound by residues I193 and 198–200; that span reads GDA. D199 lines the 5-phospho-alpha-D-ribose 1-diphosphate pocket.

It belongs to the UPRTase family. It depends on Mg(2+) as a cofactor.

It catalyses the reaction UMP + diphosphate = 5-phospho-alpha-D-ribose 1-diphosphate + uracil. It functions in the pathway pyrimidine metabolism; UMP biosynthesis via salvage pathway; UMP from uracil: step 1/1. Its activity is regulated as follows. Allosterically activated by GTP. In terms of biological role, catalyzes the conversion of uracil and 5-phospho-alpha-D-ribose 1-diphosphate (PRPP) to UMP and diphosphate. This chain is Uracil phosphoribosyltransferase, found in Methylibium petroleiphilum (strain ATCC BAA-1232 / LMG 22953 / PM1).